Consider the following 471-residue polypeptide: MSQIVTRFAPSPTGFLHIGGARTALFNWLYAKAKGGKMLLRIEDTDRQRSTKEAIDAILEGLTWLGIDWDGDVIYQFARAERHRQAVEEMLSRGNAYPCYATPEELDEMRELARKEGRPPRYDGRWRDRPASERPTDRKPVIRLRAPQEGVTVIEDQVQGTVTFPNKDLDDLVLLRSDGTPTYMLAVVVDDHDMGVTNIIRGDDHLTNAARQTQIYNALGWDVPRMAHIPLIHGPDGAKLSKRHGALGVDAYRDMGYLPAALRNYLVRLGWSHGDQEIFSTEEMVEHFDLDRVGRSAARFDFQKLENINGHYMRASSNAELFDAVMGLIPHLPDAEHRLARLTDARMEQLRAALPGLKERAKTLTELLDGAEFIFATRPLLLEEKAQAVLTAEARAHIAAMIPQLEAADWSAAGTETVVRAYAEQAGVKLGAVAQPLRAALTGRTTSPPVFDVFAVLGREESLARLKDQTA.

Positions 10 to 20 match the 'HIGH' region motif; the sequence is PSPTGFLHIGG. The tract at residues 117–137 is disordered; that stretch reads GRPPRYDGRWRDRPASERPTD. A 'KMSKS' region motif is present at residues 239-243; sequence KLSKR. Lysine 242 contributes to the ATP binding site.

The protein belongs to the class-I aminoacyl-tRNA synthetase family. Glutamate--tRNA ligase type 1 subfamily. Monomer.

The protein resides in the cytoplasm. The enzyme catalyses tRNA(Glu) + L-glutamate + ATP = L-glutamyl-tRNA(Glu) + AMP + diphosphate. Its function is as follows. Catalyzes the attachment of glutamate to tRNA(Glu) in a two-step reaction: glutamate is first activated by ATP to form Glu-AMP and then transferred to the acceptor end of tRNA(Glu). The sequence is that of Glutamate--tRNA ligase from Azorhizobium caulinodans (strain ATCC 43989 / DSM 5975 / JCM 20966 / LMG 6465 / NBRC 14845 / NCIMB 13405 / ORS 571).